Here is a 1576-residue protein sequence, read N- to C-terminus: ABC transporter ALT5 (1576 aa).

The next 10 helical transmembrane spans lie at 27 to 47 (LKFE…ILAV), 72 to 92 (ILGF…TQGT), 99 to 119 (GLFL…VIVC), 267 to 287 (LPLS…PILP), 289 to 309 (LVLI…TGFL), 321 to 341 (GLIG…SLYW), 387 to 407 (VLAG…AVIV), 417 to 437 (GFFA…ATVG), 500 to 520 (ITAM…TLAA), and 525 to 545 (VATS…APLG). The region spanning 289 to 556 (LVLIGLSISQ…LFQSVAPLMS (268 aa)) is the ABC transmembrane type-1 1 domain. One can recognise an ABC transporter 1 domain in the interval 602–834 (FRVVNGSFRW…NGGYLQSLCV (233 aa)). An ATP-binding site is contributed by 636–643 (GPVGSGKS). 7 helical membrane passes run 915–935 (VVAL…FAFP), 957–977 (FWVG…FLTM), 981–1001 (VTSI…AAIM), 1035–1054 (LIQF…VLAA), 1060–1078 (AAMY…KLYL), 1142–1162 (WLLF…VTLV), and 1171–1191 (GFAG…ASAM). One can recognise an ABC transmembrane type-1 2 domain in the interval 919–1199 (VAFLASAICY…AMQSYAKLET (281 aa)). One can recognise an ABC transporter 2 domain in the interval 1236 to 1567 (IKLDGVSASY…SHSKFRALCE (332 aa)). 1278 to 1285 (GRSGSGKS) is a binding site for ATP.

This sequence belongs to the ABC transporter superfamily. ABCC family. Conjugate transporter (TC 3.A.1.208) subfamily.

Its subcellular location is the cell membrane. ABC transporter that may provide the dual role AAL-toxin export and self-protection by allowing the fungus to evade the harmful effect of its own AAL-toxin production. The sequence is that of ABC transporter ALT5 from Alternaria alternata (Alternaria rot fungus).